The following is a 330-amino-acid chain: Polyprenyl transferase ausN (330 aa).

A run of 5 helical transmembrane segments spans residues 116–136, 165–185, 189–209, 238–258, and 260–280; these read AATIFTACLFVLGCSLLLFLP, LILINIAWAIPMAMHSLGMEP, ILSMLCMCVFFSAVIVMIDLV, AYSLFAISSLALLFGGVLGGL, and VPFVLFSVGGHIVGFWRFLRA.

It belongs to the UbiA prenyltransferase family. The cofactor is Mg(2+).

It is found in the membrane. The catalysed reaction is 3,5-dimethylorsellinate + (2E,6E)-farnesyl diphosphate = (3R)-3-farnesyl-6-hydroxy-2,3,5-trimethyl-4-oxocyclohexa-1,5-diene-1-carboxylate + diphosphate + H(+). Its pathway is secondary metabolite biosynthesis; terpenoid biosynthesis. Polyprenyl transferase; part of the gene cluster B that mediates the biosynthesis of austinol and dehydroaustinol, two fungal meroterpenoids. The first step of the pathway is the synthesis of 3,5-dimethylorsellinic acid by the polyketide synthase ausA. 3,5-dimethylorsellinic acid is then prenylated by the polyprenyl transferase ausN. Further epoxidation by the FAD-dependent monooxygenase ausM and cyclization by the probable terpene cyclase ausL lead to the formation of protoaustinoid A. Protoaustinoid A is then oxidized to spiro-lactone preaustinoid A3 by the combined action of the FAD-binding monooxygenases ausB and ausC, and the dioxygenase ausE. Acid-catalyzed keto-rearrangement and ring contraction of the tetraketide portion of preaustinoid A3 by ausJ lead to the formation of preaustinoid A4. The aldo-keto reductase ausK, with the help of ausH, is involved in the next step by transforming preaustinoid A4 into isoaustinone which is in turn hydroxylated by the P450 monooxygenase ausI to form austinolide. Finally, the cytochrome P450 monooxygenase ausG modifies austinolide to austinol. Austinol can be further modified to dehydroaustinol which forms a diffusible complex with diorcinol that initiates conidiation. Due to genetic rearrangements of the clusters and the subsequent loss of some enzymes, the end products of the Emericella nidulans austinoid biosynthesis clusters are austinol and dehydroaustinol, even if additional enzymes, such as the O-acetyltransferase ausQ and the cytochrome P450 monooxygenase ausR are still functional. The chain is Polyprenyl transferase ausN from Emericella nidulans (strain FGSC A4 / ATCC 38163 / CBS 112.46 / NRRL 194 / M139) (Aspergillus nidulans).